A 250-amino-acid polypeptide reads, in one-letter code: C-X-C motif chemokine 16 (250 aa).

The first 24 residues, 1 to 24 (MPLWELWFFLLALFLAWLTPPGNG), serve as a signal peptide directing secretion. The Extracellular portion of the chain corresponds to 25–200 (NEGSMAGSCP…NVGATAGTSA (176 aa)). Cystine bridges form between Cys33/Cys63 and Cys35/Cys77. The segment at 105-186 (VAHQQHLAPQ…AKSEARENQE (82 aa)) is disordered. Composition is skewed to polar residues over residues 128 to 147 (DSSTPAQTNLPSTLQPTQKP) and 163 to 172 (TSETDTSTVG). Residues 201 to 221 (LVPVLSLLVIIFLLTGVLLYV) traverse the membrane as a helical segment. The Cytoplasmic segment spans residues 222-250 (MCKKRQEQSRQYPPDPQLHYVPVASNINT).

This sequence belongs to the intercrine alpha (chemokine CxC) family. Post-translationally, glycosylated.

It localises to the membrane. In terms of biological role, induces a strong chemotactic response. Induces calcium mobilization. Binds to CXCR6/Bonzo. Also acts as a scavenger receptor on macrophages, which specifically binds to OxLDL (oxidized low density lipoprotein), suggesting that it may be involved in pathophysiology such as atherogenesis. This is C-X-C motif chemokine 16 (CXCL16) from Sus scrofa (Pig).